Reading from the N-terminus, the 356-residue chain is Nicotinate-nucleotide--dimethylbenzimidazole phosphoribosyltransferase (356 aa).

Residue Glu-317 is the Proton acceptor of the active site.

Belongs to the CobT family. In terms of assembly, homodimer.

It carries out the reaction 5,6-dimethylbenzimidazole + nicotinate beta-D-ribonucleotide = alpha-ribazole 5'-phosphate + nicotinate + H(+). The protein operates within nucleoside biosynthesis; alpha-ribazole biosynthesis; alpha-ribazole from 5,6-dimethylbenzimidazole: step 1/2. Catalyzes the synthesis of alpha-ribazole-5'-phosphate from nicotinate mononucleotide (NAMN) and 5,6-dimethylbenzimidazole (DMB). This Salmonella paratyphi A (strain ATCC 9150 / SARB42) protein is Nicotinate-nucleotide--dimethylbenzimidazole phosphoribosyltransferase.